The following is a 225-amino-acid chain: MSLIVKICGLSTPATLDVTLQGGADMVGFVFFPPSPRHLDLSRARELGAQVRGRAGKVALTVDADDATLGGIIEALRPDLLQLHGKETVARIREIKRTFGLPIMKAIGIETAGDLAALPGYAAVADRVLFDAHPPKDATRPGGLGVPFDWRLLENLAPGIPFMLSGGLTAGNVDAAVRTTRAGGVDVSSGVESAPGVKDAGMIGDFIRAARAAEINLREATSHVG.

This sequence belongs to the TrpF family.

The catalysed reaction is N-(5-phospho-beta-D-ribosyl)anthranilate = 1-(2-carboxyphenylamino)-1-deoxy-D-ribulose 5-phosphate. It functions in the pathway amino-acid biosynthesis; L-tryptophan biosynthesis; L-tryptophan from chorismate: step 3/5. The chain is N-(5'-phosphoribosyl)anthranilate isomerase from Nitrobacter hamburgensis (strain DSM 10229 / NCIMB 13809 / X14).